Consider the following 646-residue polypeptide: MNINQLILRNLKKNLRNYYLYVFALIFSVALYFAFVTLQYDPAINEVKASIKGAAAIKTASILLVAVVAIFILYANTIFIKRRSKEIGLFQLIGMTKHKIFRILSAENVMLYFGSLAIGVAAGFSISKLVLMILFKIVDVKADAKLHFSEQALVQTVIVFCGIYLLIMIMNYTFIKKQSILSLFKVTSSTEDKVKKISFFQMLIGALGIVLILTGYYVSSELFGGKFKTINELFVAMSFILGSVIIGTFLFYKGSVTFISNIIRKSKGGYLNISEVLSLSSIMFRMKSNALLLTIITTVSALAIGLLSLAYISYYSSEKTAEQNVAADFSFMNEKDAKLFENKLRESNISFVKKATPVLQANVDIANIMDGTPKEMQGDPGNMQLAVVSDKDVKGVDVAAGEAVFSGYTDLLQKIMVFKDSGVIKVKSKHETQPLKYKGLREEFLVSYTFTSGGMPAVIVDDSLFKQLDKDKDPRIQLAQSTFIGVNVKHDDQMEKANELFQQVNKKNEHLSRLDTSAAQKSLFGMVMFIVGFLGLTFLITSGCILYFKQMGESEDEKPSYTILRKLGFTQGDLIKGIRIKQMYNFGIPLVVGLFHSYFAVQSGWFLFGSEVWAPMIMVMVLYTALYSIFGFLSVLYYKKVIKSSL.

The next 10 membrane-spanning stretches (helical) occupy residues 18-38 (YYLY…FVTL), 60-80 (ASIL…TIFI), 115-135 (SLAI…MILF), 152-172 (ALVQ…IMNY), 197-217 (ISFF…TGYY), 232-252 (ELFV…FLFY), 290-310 (ALLL…LSLA), 526-546 (MVMF…GCIL), 588-608 (IPLV…WFLF), and 616-636 (MIMV…LSVL).

Belongs to the ABC-4 integral membrane protein family. As to quaternary structure, the complex is composed of two ATP-binding proteins (BceA) and two transmembrane proteins (BceB).

It localises to the cell membrane. In terms of biological role, part of the ABC transporter complex BceAB (TC 3.A.1.123.5) involved in bacitracin export. This chain is Bacitracin export permease protein BceB (bceB), found in Bacillus subtilis (strain 168).